A 151-amino-acid chain; its full sequence is Small ribosomal subunit protein uS15 (151 aa).

Residues 1-20 (MGRMHSNGKGISGSSLPYNR) form a disordered region.

This sequence belongs to the universal ribosomal protein uS15 family. In terms of assembly, component of the small ribosomal subunit. Part of the small subunit (SSU) processome, composed of more than 70 proteins and the RNA chaperone small nucleolar RNA (snoRNA) U3.

The protein resides in the cytoplasm. Its subcellular location is the nucleus. It localises to the nucleolus. In terms of biological role, component of the small ribosomal subunit. The ribosome is a large ribonucleoprotein complex responsible for the synthesis of proteins in the cell. Part of the small subunit (SSU) processome, first precursor of the small eukaryotic ribosomal subunit. During the assembly of the SSU processome in the nucleolus, many ribosome biogenesis factors, an RNA chaperone and ribosomal proteins associate with the nascent pre-rRNA and work in concert to generate RNA folding, modifications, rearrangements and cleavage as well as targeted degradation of pre-ribosomal RNA by the RNA exosome. The protein is Small ribosomal subunit protein uS15 (rps13) of Dictyostelium discoideum (Social amoeba).